Consider the following 288-residue polypeptide: Diaminopimelate epimerase (288 aa).

The substrate site is built by N17, Q47, and N67. The active-site Proton donor is C76. Substrate-binding positions include 77-78, N164, N197, and 215-216; these read GN and ER. Residue C224 is the Proton acceptor of the active site. 225–226 provides a ligand contact to substrate; that stretch reads GS.

It belongs to the diaminopimelate epimerase family. Homodimer.

The protein localises to the cytoplasm. It carries out the reaction (2S,6S)-2,6-diaminopimelate = meso-2,6-diaminopimelate. Its pathway is amino-acid biosynthesis; L-lysine biosynthesis via DAP pathway; DL-2,6-diaminopimelate from LL-2,6-diaminopimelate: step 1/1. Its function is as follows. Catalyzes the stereoinversion of LL-2,6-diaminopimelate (L,L-DAP) to meso-diaminopimelate (meso-DAP), a precursor of L-lysine and an essential component of the bacterial peptidoglycan. In Rhodopseudomonas palustris (strain BisA53), this protein is Diaminopimelate epimerase.